We begin with the raw amino-acid sequence, 148 residues long: Calcium-permeable cation-selective channel WeiTsing (148 aa).

The Cytoplasmic segment spans residues 1 to 25 (METVSAVNQTLPISGGEPVKFTTYS). A helical transmembrane segment spans residues 26 to 46 (AAVHKVLVMINAGILGLLQLV). The Lumenal segment spans residues 47–51 (SQQSS). The chain crosses the membrane as a helical span at residues 52-72 (VLETHKAAFLCFCVFILFYAV). Over 73-90 (LRVREAMDVRLQPGLVPR) the chain is Cytoplasmic. Residues 91-110 (LIGHGSHLFGGLAALVLVSV) form a helical membrane-spanning segment. Residues 111 to 116 (VSTAFS) are Lumenal-facing. Residues 117-133 (IVLFLLWFIWLSAVVYL) traverse the membrane as a helical segment. The Cytoplasmic segment spans residues 134 to 148 (ETNKPSACPPQLPPV).

Forms pentamers with a central pore to produce an ion channel.

It is found in the endoplasmic reticulum membrane. The enzyme catalyses Ca(2+)(in) = Ca(2+)(out). It carries out the reaction Na(+)(in) = Na(+)(out). Functionally, calcium-permeable cation-selective channel conferring a broad-spectrum clubroot resistance by supporting cytosolic Ca(2+) increase in root pericycle cells. Triggers immunity toward fungal pathogens such as Plasmodiophora brassicae (Pb) and induces defenses. Also permeable to sodium ion Na(+) and possibly other cations. In Arabidopsis thaliana (Mouse-ear cress), this protein is Calcium-permeable cation-selective channel WeiTsing.